Here is a 122-residue protein sequence, read N- to C-terminus: Small ribosomal subunit protein uS13 (122 aa).

A disordered region spans residues 97–122 (PVRGQKTKSNARTRKGPRPSRIKKKK). Positions 101-122 (QKTKSNARTRKGPRPSRIKKKK) are enriched in basic residues.

It belongs to the universal ribosomal protein uS13 family. In terms of assembly, part of the 30S ribosomal subunit. Forms a loose heterodimer with protein S19. Forms two bridges to the 50S subunit in the 70S ribosome.

Functionally, located at the top of the head of the 30S subunit, it contacts several helices of the 16S rRNA. In the 70S ribosome it contacts the 23S rRNA (bridge B1a) and protein L5 of the 50S subunit (bridge B1b), connecting the 2 subunits; these bridges are implicated in subunit movement. Contacts the tRNAs in the A and P-sites. This chain is Small ribosomal subunit protein uS13, found in Thermosipho melanesiensis (strain DSM 12029 / CIP 104789 / BI429).